The chain runs to 183 residues: Holliday junction branch migration complex subunit RuvA (183 aa).

The interval 1 to 64 (MVVGIEGIIT…EDSNKFYGFL (64 aa)) is domain I. A domain II region spans residues 65–139 (DKDEQKMFEM…DTKTKLENVS (75 aa)). Position 139 (Ser-139) is a region of interest, flexible linker. The tract at residues 139 to 183 (SDDKSEALAALLTLGFKQEKIISVLASAQATGTSELIKEALKKLG) is domain III.

It belongs to the RuvA family. As to quaternary structure, homotetramer. Forms an RuvA(8)-RuvB(12)-Holliday junction (HJ) complex. HJ DNA is sandwiched between 2 RuvA tetramers; dsDNA enters through RuvA and exits via RuvB. An RuvB hexamer assembles on each DNA strand where it exits the tetramer. Each RuvB hexamer is contacted by two RuvA subunits (via domain III) on 2 adjacent RuvB subunits; this complex drives branch migration. In the full resolvosome a probable DNA-RuvA(4)-RuvB(12)-RuvC(2) complex forms which resolves the HJ.

It localises to the cytoplasm. Functionally, the RuvA-RuvB-RuvC complex processes Holliday junction (HJ) DNA during genetic recombination and DNA repair, while the RuvA-RuvB complex plays an important role in the rescue of blocked DNA replication forks via replication fork reversal (RFR). RuvA specifically binds to HJ cruciform DNA, conferring on it an open structure. The RuvB hexamer acts as an ATP-dependent pump, pulling dsDNA into and through the RuvAB complex. HJ branch migration allows RuvC to scan DNA until it finds its consensus sequence, where it cleaves and resolves the cruciform DNA. The chain is Holliday junction branch migration complex subunit RuvA from Campylobacter jejuni subsp. jejuni serotype O:23/36 (strain 81-176).